The chain runs to 141 residues: ATP synthase epsilon chain (141 aa).

Belongs to the ATPase epsilon chain family. As to quaternary structure, F-type ATPases have 2 components, CF(1) - the catalytic core - and CF(0) - the membrane proton channel. CF(1) has five subunits: alpha(3), beta(3), gamma(1), delta(1), epsilon(1). CF(0) has three main subunits: a, b and c.

It is found in the cell inner membrane. Functionally, produces ATP from ADP in the presence of a proton gradient across the membrane. This Cellvibrio japonicus (strain Ueda107) (Pseudomonas fluorescens subsp. cellulosa) protein is ATP synthase epsilon chain.